The following is a 53-amino-acid chain: Conotoxin Cal9.2f (53 aa).

A propeptide spanning residues 1-6 is cleaved from the precursor; it reads KKGVTL. Cystine bridges form between Cys-15/Cys-32, Cys-20/Cys-42, and Cys-22/Cys-47.

As to expression, expressed by the venom duct.

The protein resides in the secreted. Functionally, probable neurotoxin with unknown target. Possibly targets ion channels. The polypeptide is Conotoxin Cal9.2f (Californiconus californicus (California cone)).